Reading from the N-terminus, the 454-residue chain is Oxygen-dependent coproporphyrinogen-III oxidase, mitochondrial (454 aa).

Residues 1–110 (MALQLGRLSS…MLPKTSGTRA (110 aa)) constitute a mitochondrion transit peptide. The segment at 43–70 (AAGRVCRPPGPAGTEQSRGLGHGSTSRG) is disordered. The residue at position 112 (S112) is a Phosphoserine. An important for dimerization region spans residues 193-202 (VLQDGCVFEK). S244 is a coproporphyrinogen III binding site. H258 functions as the Proton donor in the catalytic mechanism. 260–262 (NYR) provides a ligand contact to coproporphyrinogen III. The interval 392 to 428 (YVEFNLLYDRGTKFGLFTPGSRIESILMSLPLTARWE) is important for dimerization. N6-acetyllysine; alternate is present on K404. K404 bears the N6-succinyllysine; alternate mark. Coproporphyrinogen III is bound at residue 411–413 (GSR).

This sequence belongs to the aerobic coproporphyrinogen-III oxidase family. As to quaternary structure, homodimer.

It is found in the mitochondrion intermembrane space. It catalyses the reaction coproporphyrinogen III + O2 + 2 H(+) = protoporphyrinogen IX + 2 CO2 + 2 H2O. It functions in the pathway porphyrin-containing compound metabolism; protoporphyrin-IX biosynthesis; protoporphyrinogen-IX from coproporphyrinogen-III (O2 route): step 1/1. Its function is as follows. Catalyzes the aerobic oxidative decarboxylation of propionate groups of rings A and B of coproporphyrinogen-III to yield the vinyl groups in protoporphyrinogen-IX and participates to the sixth step in the heme biosynthetic pathway. This Homo sapiens (Human) protein is Oxygen-dependent coproporphyrinogen-III oxidase, mitochondrial.